Consider the following 630-residue polypeptide: MDLTQIQNPSFLKDMSISELEGLSEDIRKFLIEELSQTGGHIAPNLGVVELTIALHKLFDSPQDKFLWDVGHQSYVHKILTGRAKEFGTLRQYQGLCGFPKRCESEHDVWETGHSSTSLSAAMGMALARDLKKTKEYVIPIIGDGALTGGMALEALNHIGHEKTDMIVILNDNEMSIAPNVGALHNVLGRLRTAGKYHWVKDELEYILKKIPAVGGKVAATAEKIKDSLKYLLVSGVFFEELGFTYLGPVDGHDYEKLFETLQYAKKTKGPVLVHVITKKGKGYKPAESDVIGTWHGTGPYKIESGDFVKPKEVAPAWSAVVSETVLKLARADERIVAITPAMPVGSKLEKFQKEFPDRMIDVGIAEQHATTMAAGMATQGMKPFLAIYSTFLQRAYDQVVHDICRQNLNVFIGIDRSGLVGADGETHQGVFDISFLRHLPNMVLMMPKDENEGQHLVYTAMQYEDGPIALRYARGNGLGVHMDEELKAIPIGTWETLKEGTQAAILTFGTTIPMAMEAAERLEKAGVSVKVVNARFIKPMDEAYLHDLLGKNIPILTIEEACLIGGFGTGVVEFASENGYHSALVERMGIPDRFIEHGSVTKLLEEIGLTTDAVVDRIHTMIPSKQKRA.

Thiamine diphosphate is bound by residues histidine 72 and glycine 113–serine 115. Aspartate 144 is a Mg(2+) binding site. Thiamine diphosphate is bound by residues glycine 145–alanine 146, asparagine 173, tyrosine 284, and glutamate 367. Asparagine 173 provides a ligand contact to Mg(2+).

The protein belongs to the transketolase family. DXPS subfamily. In terms of assembly, homodimer. Mg(2+) is required as a cofactor. It depends on thiamine diphosphate as a cofactor.

It catalyses the reaction D-glyceraldehyde 3-phosphate + pyruvate + H(+) = 1-deoxy-D-xylulose 5-phosphate + CO2. It functions in the pathway metabolic intermediate biosynthesis; 1-deoxy-D-xylulose 5-phosphate biosynthesis; 1-deoxy-D-xylulose 5-phosphate from D-glyceraldehyde 3-phosphate and pyruvate: step 1/1. Its function is as follows. Catalyzes the acyloin condensation reaction between C atoms 2 and 3 of pyruvate and glyceraldehyde 3-phosphate to yield 1-deoxy-D-xylulose-5-phosphate (DXP). This chain is 1-deoxy-D-xylulose-5-phosphate synthase, found in Bacillus cereus (strain B4264).